A 250-amino-acid polypeptide reads, in one-letter code: Sugar fermentation stimulation protein homolog (250 aa).

It belongs to the SfsA family.

This Trichodesmium erythraeum (strain IMS101) protein is Sugar fermentation stimulation protein homolog.